A 609-amino-acid polypeptide reads, in one-letter code: Invertase (609 aa).

The N-terminal stretch at Met-1–Ala-14 is a signal peptide. Residues Asn-23, Asn-32, and Asn-36 are each glycosylated (N-linked (GlcNAc...) asparagine). Residues Trp-56 to Asp-59, Gln-77, and Phe-119 to Ser-120 each bind substrate. Residue Asp-59 is part of the active site. Asn-128, Asn-129, and Asn-135 each carry an N-linked (GlcNAc...) asparagine glycan. Substrate is bound at residue Arg-187–Asp-188. N-linked (GlcNAc...) asparagine glycans are attached at residues Asn-227 and Asn-233. Glu-245 contacts substrate. Asn-257, Asn-267, Asn-277, Asn-284, Asn-291, Asn-298, Asn-303, and Asn-345 each carry an N-linked (GlcNAc...) asparagine glycan. Trp-389 serves as a coordination point for substrate. 8 N-linked (GlcNAc...) asparagine glycosylation sites follow: Asn-409, Asn-420, Asn-440, Asn-448, Asn-452, Asn-477, Asn-545, and Asn-566.

Belongs to the glycosyl hydrolase 32 family.

The catalysed reaction is Hydrolysis of terminal non-reducing beta-D-fructofuranoside residues in beta-D-fructofuranosides.. The sequence is that of Invertase (INV1) from Kluyveromyces lactis (strain ATCC 8585 / CBS 2359 / DSM 70799 / NBRC 1267 / NRRL Y-1140 / WM37) (Yeast).